A 182-amino-acid chain; its full sequence is MAQHQHSPQRPRDQDNTRPHDQYGIVFSVSGDDVARKQGDSFSQPDPTVATMGSVDTVTIGEALEATALSLGDKPVDRRDAAAIQAAETRATGESKGRPGGLAVAAQAAATTNEQTVSEEDKVNIADILTDAAERLPGDKVVTSEDAEAVVGAELRSSSEMKTTPGGVADSMSAGARLNQQL.

The interval 1–51 is disordered; it reads MAQHQHSPQRPRDQDNTRPHDQYGIVFSVSGDDVARKQGDSFSQPDPTVAT. The Nuclear localization signal (NLS) signature appears at 7-11; that stretch reads SPQRP. Basic and acidic residues predominate over residues 10 to 21; that stretch reads RPRDQDNTRPHD. SMP domains follow at residues 58 to 115 and 123 to 181; these read VTIG…TNEQ and VNIA…LNQQ. Residues 145-182 are disordered; sequence EDAEAVVGAELRSSSEMKTTPGGVADSMSAGARLNQQL.

Belongs to the LEA type SMP family.

The protein localises to the cytoplasm. Its subcellular location is the nucleus. LEA proteins are late embryonic proteins abundant in higher plant seed embryos. The function of those proteins is not known. The sequence is that of Late embryogenesis abundant protein 3 from Arabidopsis thaliana (Mouse-ear cress).